We begin with the raw amino-acid sequence, 746 residues long: Protein psiN (746 aa).

A signal peptide spans 1 to 23 (MGNINKKLFYFLIQLITILIVLS). Over 24 to 679 (DDSYNSLLPL…KCQSAAVKAA (656 aa)) the chain is Extracellular. Residues N97 and N124 are each glycosylated (N-linked (GlcNAc...) asparagine). One can recognise a PA14 domain in the interval 125–276 (VTSDDPRIYS…YDYCGVCEGM (152 aa)). N-linked (GlcNAc...) asparagine glycosylation is found at N319, N353, N380, N477, N553, N628, and N654. Residues 680–700 (VGVGAGAAAGIAIGGAIALGL) traverse the membrane as a helical segment. The Cytoplasmic portion of the chain corresponds to 701–746 (AAFGGKRGYDAWKSSRDNQIQTSSENPLYNPNPNQGDNPLYAANNS). A disordered region spans residues 714–746 (SSRDNQIQTSSENPLYNPNPNQGDNPLYAANNS). The span at 717 to 746 (DNQIQTSSENPLYNPNPNQGDNPLYAANNS) shows a compositional bias: polar residues.

Belongs to the prespore-cell-inducing factor family.

It localises to the membrane. The protein is Protein psiN (psiN) of Dictyostelium discoideum (Social amoeba).